We begin with the raw amino-acid sequence, 342 residues long: S-adenosylmethionine:tRNA ribosyltransferase-isomerase (342 aa).

It belongs to the QueA family. As to quaternary structure, monomer.

The protein resides in the cytoplasm. The catalysed reaction is 7-aminomethyl-7-carbaguanosine(34) in tRNA + S-adenosyl-L-methionine = epoxyqueuosine(34) in tRNA + adenine + L-methionine + 2 H(+). The protein operates within tRNA modification; tRNA-queuosine biosynthesis. In terms of biological role, transfers and isomerizes the ribose moiety from AdoMet to the 7-aminomethyl group of 7-deazaguanine (preQ1-tRNA) to give epoxyqueuosine (oQ-tRNA). The polypeptide is S-adenosylmethionine:tRNA ribosyltransferase-isomerase (Listeria monocytogenes serotype 4b (strain CLIP80459)).